Reading from the N-terminus, the 365-residue chain is UDP-N-acetylglucosamine--N-acetylmuramyl-(pentapeptide) pyrophosphoryl-undecaprenol N-acetylglucosamine transferase (365 aa).

UDP-N-acetyl-alpha-D-glucosamine-binding positions include 10 to 12, Asn124, Arg165, Ser193, Ile248, and Gln293; that span reads TGG.

The protein belongs to the glycosyltransferase 28 family. MurG subfamily.

It is found in the cell inner membrane. It carries out the reaction di-trans,octa-cis-undecaprenyl diphospho-N-acetyl-alpha-D-muramoyl-L-alanyl-D-glutamyl-meso-2,6-diaminopimeloyl-D-alanyl-D-alanine + UDP-N-acetyl-alpha-D-glucosamine = di-trans,octa-cis-undecaprenyl diphospho-[N-acetyl-alpha-D-glucosaminyl-(1-&gt;4)]-N-acetyl-alpha-D-muramoyl-L-alanyl-D-glutamyl-meso-2,6-diaminopimeloyl-D-alanyl-D-alanine + UDP + H(+). It participates in cell wall biogenesis; peptidoglycan biosynthesis. Functionally, cell wall formation. Catalyzes the transfer of a GlcNAc subunit on undecaprenyl-pyrophosphoryl-MurNAc-pentapeptide (lipid intermediate I) to form undecaprenyl-pyrophosphoryl-MurNAc-(pentapeptide)GlcNAc (lipid intermediate II). This Geotalea uraniireducens (strain Rf4) (Geobacter uraniireducens) protein is UDP-N-acetylglucosamine--N-acetylmuramyl-(pentapeptide) pyrophosphoryl-undecaprenol N-acetylglucosamine transferase.